The chain runs to 728 residues: MAKWREMGLTDEEYRRIVEYLGREPNEVELGMCAVMWSEHCSYKSSKIHLKKLPTRGPAVVQGPGENAGVVDIGDGLGIAFKIESHNHPSAIEPYQGAATGVGGIIRDIFAMGARPIALLDSLRFGKLHSPRVRHLFTGVVAGIAGYGNCIGIPTVAGDVYFQESYEENPLVNAMCVGIVELSKLKKGVATGVGNPVLLVGATTGRDGIHGATFASEELSQDGEDKRPSVQVGDPFMEKLLLEACLEALEYGHIVGMQDLGAAGLTSSSSEMAARGKSGIRLYLDRVPLREEGMTPYEIMLSESQERMLLVVEKGYEDEIIKIFKKWDLNAVVVGEITDGEEIEVFFDGECVAKLPYRLLTEEAPVYDRPYRIPEIKNLQSINPAGVDCGEALRRLLQSPNIARKSYVYEQYDHQVGVNTVVKPGYSDAAVLRIKGTKKGIAVKTDGNGRYVYHNPREGAKRAVLETALNLAVTGAKPLGLTNCLNFGNPEKPEIMGQFVEVIAGMKEACEILNIPVTGGNVSFYNETGEKAIYPTPVIGMVGLIDDLETGLIPMAFQTEGDLIYLLGEPTGELGQSEFLKEFFGDVLVPVPPVDLQEGRRIIELLPLLKKQGLINSAHDVSDGGLAVSLCEAAFAGELGVNIDFTTSLLPQEFLFSEKVGLVIVSVSPEKEEEFIKSVKNAGVFVLKLGRVNGKDEIEICLNGQRVIQEKLSELKALYEGGLSWALK.

The active site involves His40. ATP-binding residues include Tyr43 and Lys82. Glu84 contributes to the Mg(2+) binding site. Substrate is bound by residues 85-88 and Arg107; that span reads SHNH. His86 serves as the catalytic Proton acceptor. Asp108 contacts Mg(2+). Residue Gln231 participates in substrate binding. Residue Asp259 participates in Mg(2+) binding. 303–305 contacts substrate; sequence ESQ. 2 residues coordinate ATP: Asn483 and Gly520. Residue Asn521 coordinates Mg(2+). Ser523 is a substrate binding site.

The protein belongs to the FGAMS family. In terms of assembly, monomer. Part of the FGAM synthase complex composed of 1 PurL, 1 PurQ and 2 PurS subunits.

The protein localises to the cytoplasm. It catalyses the reaction N(2)-formyl-N(1)-(5-phospho-beta-D-ribosyl)glycinamide + L-glutamine + ATP + H2O = 2-formamido-N(1)-(5-O-phospho-beta-D-ribosyl)acetamidine + L-glutamate + ADP + phosphate + H(+). The protein operates within purine metabolism; IMP biosynthesis via de novo pathway; 5-amino-1-(5-phospho-D-ribosyl)imidazole from N(2)-formyl-N(1)-(5-phospho-D-ribosyl)glycinamide: step 1/2. In terms of biological role, part of the phosphoribosylformylglycinamidine synthase complex involved in the purines biosynthetic pathway. Catalyzes the ATP-dependent conversion of formylglycinamide ribonucleotide (FGAR) and glutamine to yield formylglycinamidine ribonucleotide (FGAM) and glutamate. The FGAM synthase complex is composed of three subunits. PurQ produces an ammonia molecule by converting glutamine to glutamate. PurL transfers the ammonia molecule to FGAR to form FGAM in an ATP-dependent manner. PurS interacts with PurQ and PurL and is thought to assist in the transfer of the ammonia molecule from PurQ to PurL. The polypeptide is Phosphoribosylformylglycinamidine synthase subunit PurL (Carboxydothermus hydrogenoformans (strain ATCC BAA-161 / DSM 6008 / Z-2901)).